Here is a 309-residue protein sequence, read N- to C-terminus: NADH-cytochrome b5 reductase 1 (309 aa).

Residues 30-50 form a helical membrane-spanning segment; the sequence is FVPYAVALTAILAGLKLFTGG. The 106-residue stretch at 60–165 folds into the FAD-binding FR-type domain; sequence TEFQEFVLKE…RGPKGAMVYT (106 aa). FAD contacts are provided by residues 145–160 and 171–208; these read TTLKIGDTMKVRGPKG and HIGMIAGGTGITPMLQIIKAVIRNRPRNGGNDTTKLDL.

Belongs to the flavoprotein pyridine nucleotide cytochrome reductase family. As to quaternary structure, monomer. Component of the 2-(3-amino-3-carboxypropyl)histidine synthase complex composed of dph1, dph2, dph3 and a NADH-dependent reductase, predominantly cbr1. Requires FAD as cofactor.

Its subcellular location is the mitochondrion outer membrane. It catalyses the reaction 2 Fe(III)-[cytochrome b5] + NADH = 2 Fe(II)-[cytochrome b5] + NAD(+) + H(+). The catalysed reaction is 2 Fe(3+)-[Dph3] + NADH = 2 Fe(2+)-[Dph3] + NAD(+) + H(+). Its pathway is protein modification; peptidyl-diphthamide biosynthesis. NADH-dependent reductase for dph3 and cytochrome b5. Required for the first step of diphthamide biosynthesis, a post-translational modification of histidine which occurs in elongation factor 2. Dph1 and dph2 transfer a 3-amino-3-carboxypropyl (ACP) group from S-adenosyl-L-methionine (SAM) to a histidine residue, the reaction is assisted by a reduction system comprising dph3 and a NADH-dependent reductase, predominantly cbr1. By reducing dph3, also involved in the formation of the tRNA wobble base modification mcm5s 2U (5-methoxycarbonylmethyl-2-thiouridine), mediated by the elongator complex. The cytochrome b5/NADH cytochrome b5 reductase electron transfer system supports the catalytic activity of several sterol biosynthetic enzymes. This Neosartorya fischeri (strain ATCC 1020 / DSM 3700 / CBS 544.65 / FGSC A1164 / JCM 1740 / NRRL 181 / WB 181) (Aspergillus fischerianus) protein is NADH-cytochrome b5 reductase 1 (cbr1).